A 295-amino-acid chain; its full sequence is Bifunctional protein FolD (295 aa).

NADP(+) is bound by residues 165–167 (GRG), Ser-192, and Ile-233.

The protein belongs to the tetrahydrofolate dehydrogenase/cyclohydrolase family. In terms of assembly, homodimer.

It catalyses the reaction (6R)-5,10-methylene-5,6,7,8-tetrahydrofolate + NADP(+) = (6R)-5,10-methenyltetrahydrofolate + NADPH. The enzyme catalyses (6R)-5,10-methenyltetrahydrofolate + H2O = (6R)-10-formyltetrahydrofolate + H(+). It functions in the pathway one-carbon metabolism; tetrahydrofolate interconversion. In terms of biological role, catalyzes the oxidation of 5,10-methylenetetrahydrofolate to 5,10-methenyltetrahydrofolate and then the hydrolysis of 5,10-methenyltetrahydrofolate to 10-formyltetrahydrofolate. The polypeptide is Bifunctional protein FolD (Tropheryma whipplei (strain Twist) (Whipple's bacillus)).